A 151-amino-acid polypeptide reads, in one-letter code: UPF0756 membrane protein LBA0919 (151 aa).

Helical transmembrane passes span 4–24 (WLFL…SLII), 52–72 (WGVT…QIGF), 78–98 (TFKT…AVLS), and 115–135 (LVLG…GPVI).

It belongs to the UPF0756 family.

The protein resides in the cell membrane. The chain is UPF0756 membrane protein LBA0919 from Lactobacillus acidophilus (strain ATCC 700396 / NCK56 / N2 / NCFM).